Reading from the N-terminus, the 210-residue chain is Glutathione S-transferase P (210 aa).

The 80-residue stretch at 2–81 folds into the GST N-terminal domain; that stretch reads PPYTVVYFPV…HLGRTLGLYG (80 aa). Tyr-4 is subject to Phosphotyrosine; by EGFR. Residues Tyr-8, Arg-14, Trp-39, Lys-45, and 52 to 53 each bind glutathione; that span reads QL. Thr-62 is subject to Phosphothreonine. Position 65 to 66 (65 to 66) interacts with glutathione; the sequence is QS. A GST C-terminal domain is found at 83-204; it reads DQQEAALVDM…ASPEYVNLPI (122 aa). N6-succinyllysine is present on residues Lys-103 and Lys-116. Lys-128 carries the post-translational modification N6-acetyllysine. Tyr-199 bears the Phosphotyrosine; by EGFR mark.

The protein belongs to the GST superfamily. Pi family. Homodimer. Interacts with CDK5.

The protein localises to the cytoplasm. Its subcellular location is the mitochondrion. It localises to the nucleus. It catalyses the reaction RX + glutathione = an S-substituted glutathione + a halide anion + H(+). The enzyme catalyses prostaglandin J2 + glutathione = prostaglandin J2-S-(R)-glutathione. The catalysed reaction is prostaglandin J2 + glutathione = prostaglandin J2-S-(S)-glutathione. It carries out the reaction prostaglandin A2 + glutathione = prostaglandin A2-S-(S)-glutathione. It catalyses the reaction 11(S)-hydroxy-14(S),15(S)-epoxy-(5Z,8Z,12E)-eicosatrienoate + glutathione = (11S,15S)-dihydroxy-14(R)-S-glutathionyl-(5Z,8Z,12E)-eicosatrienoate. In terms of biological role, conjugation of reduced glutathione to a wide number of exogenous and endogenous hydrophobic electrophiles. Involved in the formation of glutathione conjugates of both prostaglandin A2 (PGA2) and prostaglandin J2 (PGJ2). Participates in the formation of novel hepoxilin regioisomers. Negatively regulates CDK5 activity via p25/p35 translocation to prevent neurodegeneration. This chain is Glutathione S-transferase P, found in Homo sapiens (Human).